The sequence spans 265 residues: Putative N(omega)-hydroxy-L-arginine synthase DcsA (265 aa).

The protein belongs to the DcsA family. Requires heme as cofactor.

In terms of biological role, involved in the biosynthesis of the antibiotic D-cycloserine (DCS), a cyclic structural analog of D-alanine, used as an antitubercular agent. Could catalyze the production of N(omega)-hydroxy-L-arginine (NHA) from L-arginine. This chain is Putative N(omega)-hydroxy-L-arginine synthase DcsA, found in Streptomyces lavendulae.